A 637-amino-acid chain; its full sequence is Protein arginine N-methyltransferase 5 (637 aa).

The residue at position 2 (A2) is an N-acetylalanine. A TIM barrel region spans residues 13 to 292 (RVSSGRDLNC…YLEYLSQNRP (280 aa)). The region spanning 308–615 (LQSPLQPLMD…SNSKKVWYEW (308 aa)) is the SAM-dependent MTase PRMT-type domain. Residue Y324 coordinates S-adenosyl-L-methionine. F327 is a binding site for a protein. S-adenosyl-L-methionine is bound by residues 333–334 (KY), E392, and 419–420 (DM). Residues E435 and E444 each coordinate a protein. Residues E435 and E444 each act as proton donor/acceptor in the active site. The beta barrel stretch occupies residues 465–637 (PGEYTSFLAP…PTGRSYTIGL (173 aa)). The dimerization stretch occupies residues 488-494 (REKDRDP).

It belongs to the class I-like SAM-binding methyltransferase superfamily. Protein arginine N-methyltransferase family. Forms, at least, homodimers and homotetramers. Component of the methylosome complex, composed of PRMT5, WDR77 and CLNS1A. Found in a complex composed of PRMT5, WDR77 and RIOK1. RIOK1 and CLNS1A associate with PRMT5 in a mutually exclusive fashion, which allows the recruitment of distinct methylation substrates, such as nucleolin/NCL and Sm proteins, respectively. Interacts with PRDM1. Identified in a complex composed of methylosome and PRMT1 and ERH. Interacts with EGFR; methylates EGFR and stimulates EGFR-mediated ERK activation. Interacts with HOXA9. Interacts with SRGAP2. Found in a complex with COPRS, RUNX1 and CBFB. Interacts with CHTOP; the interaction symmetrically methylates CHTOP, but seems to require the presence of PRMT1. Interacts with EPB41L3; this modulates methylation of target proteins. Component of a high molecular weight E2F-pocket protein complex, CERC (cyclin E1 repressor complex). Associates with SWI/SNF remodeling complexes containing SMARCA2 and SMARCA4. Interacts with JAK2, SSTR1, SUPT5H, BRAF and with active RAF1. Interacts with LSM11, PRMT7 and SNRPD3. Interacts with COPRS; promoting its recruitment on histone H4. Interacts with CLNS1A/pICln. Identified in a complex with CLNS1A/pICln and Sm proteins. Interacts with RPS10. Interacts with WDR77. Interacts with IWS1. Interacts with CRY1. Interacts with POLR2A. Interacts with SMN1/SMN2. Interacts with LYAR; this interaction is direct. Interacts with TTC5/STRAP; this interaction is DNA damage-dependent and promotes PRMT5 interaction with p53/TP53. Interacts with p53/TP53 in response to DNA damage; the interaction is TTC5/STRAP dependent. Interacts with FAM47E; the interaction is direct, promotes PRMT5 localization to chromatin, and does not disrupt its association with WDR77 or STUB1. Interacts with TDRD6. Interacts with STUB1. Interacts with MBD2. Does not interact with MBD3.

It is found in the cytoplasm. It localises to the nucleus. The protein localises to the golgi apparatus. The enzyme catalyses L-arginyl-[protein] + 2 S-adenosyl-L-methionine = N(omega),N(omega)'-dimethyl-L-arginyl-[protein] + 2 S-adenosyl-L-homocysteine + 2 H(+). Activity is increased by EGF, HGF, FGF1 or FGF2 treatments, and slightly decreased by NGF treatment. Its function is as follows. Arginine methyltransferase that can both catalyze the formation of omega-N monomethylarginine (MMA) and symmetrical dimethylarginine (sDMA), with a preference for the formation of MMA. Specifically mediates the symmetrical dimethylation of arginine residues in the small nuclear ribonucleoproteins Sm D1 (SNRPD1) and Sm D3 (SNRPD3); such methylation being required for the assembly and biogenesis of snRNP core particles. Methylates SUPT5H and may regulate its transcriptional elongation properties. May methylate the N-terminal region of MBD2. Mono- and dimethylates arginine residues of myelin basic protein (MBP) in vitro. May play a role in cytokine-activated transduction pathways. Negatively regulates cyclin E1 promoter activity and cellular proliferation. Methylates histone H2A and H4 'Arg-3' during germ cell development. Methylates histone H3 'Arg-8', which may repress transcription. Methylates the Piwi proteins (PIWIL1, PIWIL2 and PIWIL4), methylation of Piwi proteins being required for the interaction with Tudor domain-containing proteins and subsequent localization to the meiotic nuage. Methylates RPS10. Attenuates EGF signaling through the MAPK1/MAPK3 pathway acting at 2 levels. First, monomethylates EGFR; this enhances EGFR 'Tyr-1197' phosphorylation and PTPN6 recruitment, eventually leading to reduced SOS1 phosphorylation. Second, methylates RAF1 and probably BRAF, hence destabilizing these 2 signaling proteins and reducing their catalytic activity. Required for induction of E-selectin and VCAM-1, on the endothelial cells surface at sites of inflammation. Methylates HOXA9. Methylates and regulates SRGAP2 which is involved in cell migration and differentiation. Acts as a transcriptional corepressor in CRY1-mediated repression of the core circadian component PER1 by regulating the H4R3 dimethylation at the PER1 promoter. Methylates GM130/GOLGA2, regulating Golgi ribbon formation. Methylates H4R3 in genes involved in glioblastomagenesis in a CHTOP- and/or TET1-dependent manner. Symmetrically methylates POLR2A, a modification that allows the recruitment to POLR2A of proteins including SMN1/SMN2 and SETX. This is required for resolving RNA-DNA hybrids created by RNA polymerase II, that form R-loop in transcription terminal regions, an important step in proper transcription termination. Along with LYAR, binds the promoter of gamma-globin HBG1/HBG2 and represses its expression. Symmetrically methylates NCL. Methylates p53/TP53; methylation might possibly affect p53/TP53 target gene specificity. Involved in spliceosome maturation and mRNA splicing in prophase I spermatocytes through the catalysis of the symmetrical arginine dimethylation of SNRPB (small nuclear ribonucleoprotein-associated protein) and the interaction with tudor domain-containing protein TDRD6. The sequence is that of Protein arginine N-methyltransferase 5 (PRMT5) from Macaca fascicularis (Crab-eating macaque).